A 194-amino-acid chain; its full sequence is Xanthine phosphoribosyltransferase (194 aa).

Residues leucine 20 and asparagine 27 each coordinate xanthine. 5-phospho-alpha-D-ribose 1-diphosphate is bound at residue 128 to 132 (ANGQA). Residue lysine 156 participates in xanthine binding.

The protein belongs to the purine/pyrimidine phosphoribosyltransferase family. Xpt subfamily. As to quaternary structure, homodimer.

It is found in the cytoplasm. The enzyme catalyses XMP + diphosphate = xanthine + 5-phospho-alpha-D-ribose 1-diphosphate. It participates in purine metabolism; XMP biosynthesis via salvage pathway; XMP from xanthine: step 1/1. In terms of biological role, converts the preformed base xanthine, a product of nucleic acid breakdown, to xanthosine 5'-monophosphate (XMP), so it can be reused for RNA or DNA synthesis. In Bacillus licheniformis (strain ATCC 14580 / DSM 13 / JCM 2505 / CCUG 7422 / NBRC 12200 / NCIMB 9375 / NCTC 10341 / NRRL NRS-1264 / Gibson 46), this protein is Xanthine phosphoribosyltransferase.